The primary structure comprises 182 residues: Large ribosomal subunit protein bL19m (182 aa).

A mitochondrion-targeting transit peptide spans methionine 1 to glycine 21.

It belongs to the bacterial ribosomal protein bL19 family. In terms of assembly, component of the mitochondrial large ribosomal subunit (mt-LSU). Mature yeast 74S mitochondrial ribosomes consist of a small (37S) and a large (54S) subunit. The 37S small subunit contains a 15S ribosomal RNA (15S mt-rRNA) and at least 32 different proteins. The 54S large subunit contains a 21S rRNA (21S mt-rRNA) and at least 45 different proteins.

It localises to the mitochondrion. Functionally, component of the mitochondrial ribosome (mitoribosome), a dedicated translation machinery responsible for the synthesis of mitochondrial genome-encoded proteins, including at least some of the essential transmembrane subunits of the mitochondrial respiratory chain. The mitoribosomes are attached to the mitochondrial inner membrane and translation products are cotranslationally integrated into the membrane. bL19m is essential for respiration. This chain is Large ribosomal subunit protein bL19m (img1), found in Schizosaccharomyces pombe (strain 972 / ATCC 24843) (Fission yeast).